Consider the following 229-residue polypeptide: 2-C-methyl-D-erythritol 4-phosphate cytidylyltransferase (229 aa).

It belongs to the IspD/TarI cytidylyltransferase family. IspD subfamily.

The enzyme catalyses 2-C-methyl-D-erythritol 4-phosphate + CTP + H(+) = 4-CDP-2-C-methyl-D-erythritol + diphosphate. Its pathway is isoprenoid biosynthesis; isopentenyl diphosphate biosynthesis via DXP pathway; isopentenyl diphosphate from 1-deoxy-D-xylulose 5-phosphate: step 2/6. In terms of biological role, catalyzes the formation of 4-diphosphocytidyl-2-C-methyl-D-erythritol from CTP and 2-C-methyl-D-erythritol 4-phosphate (MEP). The protein is 2-C-methyl-D-erythritol 4-phosphate cytidylyltransferase of Clostridium botulinum (strain ATCC 19397 / Type A).